The sequence spans 118 residues: HTH-type transcriptional regulator SarT (118 aa).

A DNA-binding region (H-T-H motif) is located at residues 55–78 (MRDIISYIGIDQSRIVKSVKDLSK).

It belongs to the SarA family.

It localises to the cytoplasm. Functionally, transcriptional regulator acting as an intermediary between major regulators sarA and agr and virulence genes. Represses alpha-hemolysin (hla) gene expression. Down-regulates agr RNAIII expression by repressing sarU, a positive activator of agr expression. Up-regulates sarS, which induces the expression of the cell wall-associated protein A (spa). This Staphylococcus aureus (strain NCTC 8325 / PS 47) protein is HTH-type transcriptional regulator SarT (sarT).